The sequence spans 425 residues: Histidine--tRNA ligase (425 aa).

This sequence belongs to the class-II aminoacyl-tRNA synthetase family. As to quaternary structure, homodimer.

It is found in the cytoplasm. It catalyses the reaction tRNA(His) + L-histidine + ATP = L-histidyl-tRNA(His) + AMP + diphosphate + H(+). In Desulforapulum autotrophicum (strain ATCC 43914 / DSM 3382 / VKM B-1955 / HRM2) (Desulfobacterium autotrophicum), this protein is Histidine--tRNA ligase.